We begin with the raw amino-acid sequence, 81 residues long: Large ribosomal subunit protein bL31B (81 aa).

Belongs to the bacterial ribosomal protein bL31 family. Type B subfamily. In terms of assembly, part of the 50S ribosomal subunit.

The protein is Large ribosomal subunit protein bL31B of Borreliella burgdorferi (strain ATCC 35210 / DSM 4680 / CIP 102532 / B31) (Borrelia burgdorferi).